Here is a 207-residue protein sequence, read N- to C-terminus: Large ribosomal subunit protein uL4 (207 aa).

The interval 48–89 is disordered; sequence SHKVKNRSEVRGGGRKPWRQKGTGRARQGSIRSPQWRGGGVV. A compositionally biased stretch (basic residues) spans 60 to 71; that stretch reads GGRKPWRQKGTG.

It belongs to the universal ribosomal protein uL4 family. As to quaternary structure, part of the 50S ribosomal subunit.

One of the primary rRNA binding proteins, this protein initially binds near the 5'-end of the 23S rRNA. It is important during the early stages of 50S assembly. It makes multiple contacts with different domains of the 23S rRNA in the assembled 50S subunit and ribosome. Its function is as follows. Forms part of the polypeptide exit tunnel. The chain is Large ribosomal subunit protein uL4 from Bacillus velezensis (strain DSM 23117 / BGSC 10A6 / LMG 26770 / FZB42) (Bacillus amyloliquefaciens subsp. plantarum).